Reading from the N-terminus, the 308-residue chain is D-2-hydroxyacid dehydrogenase (308 aa).

NAD(+) is bound by residues 145–146 (TL), 224–226 (VAR), and Asp-250. Residue Arg-226 is part of the active site. The active site involves Glu-255. Catalysis depends on His-274, which acts as the Proton donor. 274-277 (HVSA) is a binding site for NAD(+).

Belongs to the D-isomer specific 2-hydroxyacid dehydrogenase family. Homotetramer.

In terms of biological role, catalyzes the stereospecific NAD(P)H-dependent reduction of 2-ketocarboxylic acids into the corresponding D-2-hydroxycarboxylic acids. Can use both NADPH or NADH as reductant, displaying a marked preference for NADPH over NADH. Shows a broad substrate specificity, although it displays a marked preference for the 2-ketocarboxylic acids having an unbranched chain of 4-5 carbon atoms. The polypeptide is D-2-hydroxyacid dehydrogenase (ddh) (Haloferax mediterranei (strain ATCC 33500 / DSM 1411 / JCM 8866 / NBRC 14739 / NCIMB 2177 / R-4) (Halobacterium mediterranei)).